We begin with the raw amino-acid sequence, 113 residues long: Endoribonuclease SymE (113 aa).

The SpoVT-AbrB domain occupies 29 to 74; it reads SRYPDYSRIPAITLKGQWLEAAGFATGTAIDVKVMEGCIVLTAQPP.

This sequence belongs to the SymE family.

It localises to the cytoplasm. Involved in the degradation and recycling of damaged RNA. It is itself a target for degradation by the ATP-dependent protease Lon. The polypeptide is Endoribonuclease SymE (Escherichia coli O1:K1 / APEC).